Here is a 640-residue protein sequence, read N- to C-terminus: Chitin elicitor receptor kinase 1 (640 aa).

Residues 1-31 (MKFQMKMKSELCRTYKYWLILLVLWLSGVTQ) form the signal peptide. The Extracellular segment spans residues 32–248 (RETGVLIVDA…GTVHWRSNVG (217 aa)). Cystine bridges form between C43–C104, C49–C166, and C102–C164. LysM domains are found at residues 53-98 (AYYR…NIYL), 113-160 (FSYT…SLTI), and 179-227 (STYV…KAAN). Residues 119–125 (TNDTAEK) and 148–154 (DLSSIYS) each bind chitin. The chain crosses the membrane as a helical span at residues 249 to 269 (IIVGVVVGGIVLAVLLLFALI). The Cytoplasmic portion of the chain corresponds to 270–640 (FGFKHFRRRK…SQPPSGNDQL (371 aa)). A disordered region spans residues 286–308 (MQQSGLLSSSSMAGSKPSRSGST). Over residues 289–307 (SGLLSSSSMAGSKPSRSGS) the composition is skewed to low complexity. Residues 330-612 (FSLAKKIGQG…RFAVVQLMTL (283 aa)) form the Protein kinase domain. ATP-binding positions include 336-344 (IGQGGFASV) and K357. The active-site Proton acceptor is D452.

It belongs to the protein kinase superfamily. Ser/Thr protein kinase family.

The protein localises to the cell membrane. The catalysed reaction is L-seryl-[protein] + ATP = O-phospho-L-seryl-[protein] + ADP + H(+). It carries out the reaction L-threonyl-[protein] + ATP = O-phospho-L-threonyl-[protein] + ADP + H(+). Lysin motif (LysM) receptor kinase required as a cell surface receptor for chitin elicitor (chitooligosaccharides) signaling leading to innate immunity in response to biotic stresses. The CERK1, MEKK1a/b, MKK1a/b/c and MPK4a/b proteins are involved in pathogen defense. The pathway induces rapid growth inhibition, cell wall depositions and accumulation of defense-related transcripts. This protein is required for response to chitin. Is able to complement the A.thaliana cerk1 mutant. The polypeptide is Chitin elicitor receptor kinase 1 (Physcomitrium patens (Spreading-leaved earth moss)).